Reading from the N-terminus, the 588-residue chain is Arginine--tRNA ligase (588 aa).

The 'HIGH' region motif lies at 126–136 (PNIAKEMHVGH).

It belongs to the class-I aminoacyl-tRNA synthetase family. In terms of assembly, monomer.

It localises to the cytoplasm. The enzyme catalyses tRNA(Arg) + L-arginine + ATP = L-arginyl-tRNA(Arg) + AMP + diphosphate. The sequence is that of Arginine--tRNA ligase from Nostoc sp. (strain PCC 7120 / SAG 25.82 / UTEX 2576).